A 166-amino-acid chain; its full sequence is MNGAKQAPEISVNRAGRQARIVAILSTESVSSQSELAALLAVQGIEATQATLSRDLEELGAVKLRGADGGVGVYVVPEDGSPVRGVTGGTGRLARLLGELLVSSDASANLAVLRTPPGGAHYLASAIDRAALPYVVGTIAGDDTVFVAAREPMTGAELAIALEKLK.

It belongs to the ArgR family.

It is found in the cytoplasm. It functions in the pathway amino-acid biosynthesis; L-arginine biosynthesis [regulation]. Functionally, regulates arginine biosynthesis genes. This Mycobacterium ulcerans (strain Agy99) protein is Arginine repressor.